The sequence spans 264 residues: Thiazole synthase (264 aa).

Lys-106 (schiff-base intermediate with DXP) is an active-site residue. 1-deoxy-D-xylulose 5-phosphate-binding positions include Gly-167, 193-194 (AG), and 215-216 (NS).

Belongs to the ThiG family. Homotetramer. Forms heterodimers with either ThiH or ThiS.

The protein localises to the cytoplasm. The catalysed reaction is [ThiS sulfur-carrier protein]-C-terminal-Gly-aminoethanethioate + 2-iminoacetate + 1-deoxy-D-xylulose 5-phosphate = [ThiS sulfur-carrier protein]-C-terminal Gly-Gly + 2-[(2R,5Z)-2-carboxy-4-methylthiazol-5(2H)-ylidene]ethyl phosphate + 2 H2O + H(+). It functions in the pathway cofactor biosynthesis; thiamine diphosphate biosynthesis. Functionally, catalyzes the rearrangement of 1-deoxy-D-xylulose 5-phosphate (DXP) to produce the thiazole phosphate moiety of thiamine. Sulfur is provided by the thiocarboxylate moiety of the carrier protein ThiS. In vitro, sulfur can be provided by H(2)S. The protein is Thiazole synthase of Pseudomonas fluorescens (strain Pf0-1).